A 339-amino-acid polypeptide reads, in one-letter code: Phenylalanine--tRNA ligase alpha subunit (339 aa).

Position 254 (E254) interacts with Mg(2+).

Belongs to the class-II aminoacyl-tRNA synthetase family. Phe-tRNA synthetase alpha subunit type 1 subfamily. Tetramer of two alpha and two beta subunits. The cofactor is Mg(2+).

Its subcellular location is the cytoplasm. The enzyme catalyses tRNA(Phe) + L-phenylalanine + ATP = L-phenylalanyl-tRNA(Phe) + AMP + diphosphate + H(+). The polypeptide is Phenylalanine--tRNA ligase alpha subunit (Clostridium beijerinckii (strain ATCC 51743 / NCIMB 8052) (Clostridium acetobutylicum)).